Consider the following 950-residue polypeptide: ABC transporter A family member 9 (950 aa).

The next 6 membrane-spanning stretches (helical) occupy residues 31-51 (ATCL…SIEE), 223-243 (IISA…MFGF), 276-296 (WLIW…LFGM), 308-328 (FVLV…LAFA), 342-362 (VGFL…AGFP), and 426-446 (IWLV…DNII). The region spanning 520–765 (VQIHGLAKTY…FGTGFVATVS (246 aa)) is the ABC transporter domain. Residue 566–573 (GPNGAGKT) participates in ATP binding.

Belongs to the ABC transporter superfamily. ABCA family. CPR flippase (TC 3.A.1.211) subfamily. Highly expressed in siliques. Detected in seedlings, rosette leaves, stems and flowers.

It localises to the endoplasmic reticulum membrane. Its function is as follows. Mediates the transport of acyl-CoAs and/or free fatty acids to the endoplasmic reticulum. Has no effect on the selectivity of fatty acid incorporation into triacylglycerol or further desaturation steps. This is ABC transporter A family member 9 (ABCA9) from Arabidopsis thaliana (Mouse-ear cress).